The sequence spans 282 residues: NAD kinase (282 aa).

Residue D67 is the Proton acceptor of the active site. NAD(+) contacts are provided by residues 67–68 (DG), 140–141 (NE), H151, R170, D172, and 183–188 (TAYNLS).

The protein belongs to the NAD kinase family. The cofactor is a divalent metal cation.

Its subcellular location is the cytoplasm. It catalyses the reaction NAD(+) + ATP = ADP + NADP(+) + H(+). Functionally, involved in the regulation of the intracellular balance of NAD and NADP, and is a key enzyme in the biosynthesis of NADP. Catalyzes specifically the phosphorylation on 2'-hydroxyl of the adenosine moiety of NAD to yield NADP. The chain is NAD kinase from Halobacterium salinarum (strain ATCC 700922 / JCM 11081 / NRC-1) (Halobacterium halobium).